The following is a 285-amino-acid chain: Mediator of RNA polymerase II transcription subunit 4 (285 aa).

Residues 1–13 are compositionally biased toward low complexity; it reads MSTPGPVPSSTSV. The disordered stretch occupies residues 1–25; sequence MSTPGPVPSSTSVATLPFSAQDKTQ. A coiled-coil region spans residues 31 to 115; sequence ELQSVGIYQD…TREILETLNT (85 aa). The interval 206 to 285 is disordered; the sequence is DNVNNDNNTS…DLDLFNPDEF (80 aa). Composition is skewed to basic and acidic residues over residues 216–250 and 257–267; these read KIDEMRNTNEDSVDDRFNNKEQVQDATEDTERRGS and GKEDSETKSEE. Residues 268–285 show a composition bias toward acidic residues; it reads NPDLELDLDLDLFNPDEF.

Belongs to the Mediator complex subunit 4 family. In terms of assembly, component of the Mediator complex.

The protein resides in the nucleus. Component of the Mediator complex, a coactivator involved in the regulated transcription of nearly all RNA polymerase II-dependent genes. Mediator functions as a bridge to convey information from gene-specific regulatory proteins to the basal RNA polymerase II transcription machinery. Mediator is recruited to promoters by direct interactions with regulatory proteins and serves as a scaffold for the assembly of a functional preinitiation complex with RNA polymerase II and the general transcription factors. This is Mediator of RNA polymerase II transcription subunit 4 (MED4) from Kluyveromyces lactis (strain ATCC 8585 / CBS 2359 / DSM 70799 / NBRC 1267 / NRRL Y-1140 / WM37) (Yeast).